Here is a 477-residue protein sequence, read N- to C-terminus: Cysteine--tRNA ligase (477 aa).

Zn(2+) is bound at residue Cys29. The short motif at Pro31 to His41 is the 'HIGH' region element. Zn(2+) is bound by residues Cys219, His244, and Glu248. Positions Lys275 to Ser279 match the 'KMSKS' region motif. An ATP-binding site is contributed by Lys278.

Belongs to the class-I aminoacyl-tRNA synthetase family. As to quaternary structure, monomer. Zn(2+) serves as cofactor.

The protein resides in the cytoplasm. It carries out the reaction tRNA(Cys) + L-cysteine + ATP = L-cysteinyl-tRNA(Cys) + AMP + diphosphate. In Leifsonia xyli subsp. xyli (strain CTCB07), this protein is Cysteine--tRNA ligase.